The chain runs to 328 residues: Nitrilase (328 aa).

A CN hydrolase domain is found at 9 to 286; the sequence is VRVAAIQAEP…EGILYANVDV (278 aa). The Proton acceptor role is filled by E49. K131 is a catalytic residue. Catalysis depends on C166, which acts as the Nucleophile.

It belongs to the carbon-nitrogen hydrolase superfamily. Nitrilase family.

The catalysed reaction is a nitrile + 2 H2O = a carboxylate + NH4(+). Functionally, nitrilase that hydrolyzes preferentially 4-cyanopyridine. Is also able to hydrolyze some aliphatic nitriles, such as (R,S)-mandelonitrile. The polypeptide is Nitrilase (Penicillium rubens (strain ATCC 28089 / DSM 1075 / NRRL 1951 / Wisconsin 54-1255) (Penicillium chrysogenum)).